A 391-amino-acid polypeptide reads, in one-letter code: CBS domain-containing protein CBSX5 (391 aa).

CBS domains lie at 16–81 (GKPP…DHDH) and 331–391 (MARK…ENDM).

The sequence is that of CBS domain-containing protein CBSX5 (CBSX5) from Arabidopsis thaliana (Mouse-ear cress).